Consider the following 299-residue polypeptide: Nucleotide-binding protein SCO1952 (299 aa).

23–30 lines the ATP pocket; sequence GMSGAGRS. 74 to 77 contacts GTP; the sequence is DVRG.

The protein belongs to the RapZ-like family.

In terms of biological role, displays ATPase and GTPase activities. The sequence is that of Nucleotide-binding protein SCO1952 from Streptomyces coelicolor (strain ATCC BAA-471 / A3(2) / M145).